We begin with the raw amino-acid sequence, 802 residues long: Xylanase/beta-glucanase (802 aa).

The first 31 residues, 1 to 31, serve as a signal peptide directing secretion; that stretch reads MKKSIFKRYAAAVGLMASVLMFTAVPTTSNA. Residues 32–239 enclose the GH11 domain; that stretch reads ADDQKTGKVG…SNGSANVKSI (208 aa). Glu-124 functions as the Nucleophile in the catalytic mechanism. The active-site Proton donor is Glu-226. The interval 245–523 is b; the sequence is IDIPDPEPIK…SYLEGHDPSK (279 aa). The CBM-cenC domain maps to 258-404; sequence NGYYLKENFE…YMDGAYAGVK (147 aa). Disordered stretches follow at residues 414–436 and 533–564; these read SQSV…PSVT and TTTT…YRDL. Low complexity-rich tracts occupy residues 419 to 436 and 533 to 553; these read PPVT…PSVT and TTTT…TTTT. Residues 434 to 513 form the Dockerin domain; that stretch reads SVTKWGDANC…LIRAISELPE (80 aa). The tract at residues 524–555 is linker; it reads TTTTTTRITTTTTTTTTTTTSKTTTTTTTTSP. One can recognise a GH16 domain in the interval 556-792; sequence AMHGGYRDLG…WVTYNKNGVQ (237 aa). Catalysis depends on Glu-684, which acts as the Nucleophile.

The protein in the N-terminal section; belongs to the glycosyl hydrolase 11 (cellulase G) family. It in the C-terminal section; belongs to the glycosyl hydrolase 16 family.

The catalysed reaction is Endohydrolysis of (1-&gt;4)-beta-D-xylosidic linkages in xylans.. It carries out the reaction Hydrolysis of (1-&gt;4)-beta-D-glucosidic linkages in beta-D-glucans containing (1-&gt;3)- and (1-&gt;4)-bonds.. The protein operates within glycan degradation; xylan degradation. Its function is as follows. Contains two catalytic domains with xylanase and endo-beta-1,3-1,4 glucanase activities. The polypeptide is Xylanase/beta-glucanase (xynD) (Ruminococcus flavefaciens).